Reading from the N-terminus, the 123-residue chain is MKLPVAQYSAPDGVEKSFAPIRDDPRYMTTEGRTTGPSDHVLNAGQIDRDKPSEPERTKDGSQLTYLGQLRTQLTGLQDDINEFLTGRMELAKNKKKAGADEKRIQEEINQLLDGGDGDEDAV.

A disordered region spans residues 1–63 (MKLPVAQYSA…EPERTKDGSQ (63 aa)). Basic and acidic residues predominate over residues 47–60 (IDRDKPSEPERTKD).

Belongs to the GON7 family. As to quaternary structure, component of the EKC/KEOPS complex composed of at least BUD32, CGI121, GON7, KAE1 and PCC1; the whole complex dimerizes.

The protein localises to the nucleus. Its subcellular location is the chromosome. It is found in the telomere. Its function is as follows. Component of the EKC/KEOPS complex that is required for the formation of a threonylcarbamoyl group on adenosine at position 37 (t(6)A37) in tRNAs that read codons beginning with adenine. The complex is probably involved in the transfer of the threonylcarbamoyl moiety of threonylcarbamoyl-AMP (TC-AMP) to the N6 group of A37. GON7 likely plays a supporting role to the catalytic subunit KAE1 in the complex. The EKC/KEOPS complex also promotes both telomere uncapping and telomere elongation. The complex is required for efficient recruitment of transcriptional coactivators. In Saccharomyces cerevisiae (strain ATCC 204508 / S288c) (Baker's yeast), this protein is EKC/KEOPS complex subunit GON7 (GON7).